The chain runs to 429 residues: Serine--tRNA ligase (429 aa).

229–231 (TAE) lines the L-serine pocket. 260–262 (RSE) contributes to the ATP binding site. Position 283 (Glu-283) interacts with L-serine. ATP is bound at residue 347 to 350 (EISS). Ser-383 is an L-serine binding site.

The protein belongs to the class-II aminoacyl-tRNA synthetase family. Type-1 seryl-tRNA synthetase subfamily. In terms of assembly, homodimer. The tRNA molecule binds across the dimer.

It localises to the cytoplasm. It carries out the reaction tRNA(Ser) + L-serine + ATP = L-seryl-tRNA(Ser) + AMP + diphosphate + H(+). The catalysed reaction is tRNA(Sec) + L-serine + ATP = L-seryl-tRNA(Sec) + AMP + diphosphate + H(+). Its pathway is aminoacyl-tRNA biosynthesis; selenocysteinyl-tRNA(Sec) biosynthesis; L-seryl-tRNA(Sec) from L-serine and tRNA(Sec): step 1/1. Catalyzes the attachment of serine to tRNA(Ser). Is also able to aminoacylate tRNA(Sec) with serine, to form the misacylated tRNA L-seryl-tRNA(Sec), which will be further converted into selenocysteinyl-tRNA(Sec). This Orientia tsutsugamushi (strain Boryong) (Rickettsia tsutsugamushi) protein is Serine--tRNA ligase.